The sequence spans 749 residues: uncharacterized protein (749 aa).

Disordered regions lie at residues 1–58, 124–170, 200–291, and 385–405; these read MGTV…QPSN, DANA…PSPL, SRFS…PPVS, and YTWSRHSTSGPSRSTVLNPST. Residues 13–24 are compositionally biased toward low complexity; it reads LNNGLSSNNGSS. Polar residues-rich tracts occupy residues 149–159, 238–252, 265–275, and 388–405; these read KSASKDSNAFN, ESKTSPFATRRPSLN, LNYQNSSLNPS, and SRHSTSGPSRSTVLNPST. Residues 644 to 729 form the PSP1 C-terminal domain; sequence KRILRKAQPH…YKTRIWMCAV (86 aa).

This is an uncharacterized protein from Schizosaccharomyces pombe (strain 972 / ATCC 24843) (Fission yeast).